Here is an 88-residue protein sequence, read N- to C-terminus: Small ribosomal subunit protein uS15 (88 aa).

This sequence belongs to the universal ribosomal protein uS15 family. As to quaternary structure, part of the 30S ribosomal subunit. Forms a bridge to the 50S subunit in the 70S ribosome, contacting the 23S rRNA.

One of the primary rRNA binding proteins, it binds directly to 16S rRNA where it helps nucleate assembly of the platform of the 30S subunit by binding and bridging several RNA helices of the 16S rRNA. In terms of biological role, forms an intersubunit bridge (bridge B4) with the 23S rRNA of the 50S subunit in the ribosome. The polypeptide is Small ribosomal subunit protein uS15 (Mycoplasma mobile (strain ATCC 43663 / 163K / NCTC 11711) (Mesomycoplasma mobile)).